Consider the following 116-residue polypeptide: NADPH-dependent 7-cyano-7-deazaguanine reductase (116 aa).

The Thioimide intermediate role is filled by C31. D38 serves as the catalytic Proton donor. Substrate contacts are provided by residues I53–L55 and Y72–E73.

The protein belongs to the GTP cyclohydrolase I family. QueF type 1 subfamily.

Its subcellular location is the cytoplasm. The enzyme catalyses 7-aminomethyl-7-carbaguanine + 2 NADP(+) = 7-cyano-7-deazaguanine + 2 NADPH + 3 H(+). It functions in the pathway tRNA modification; tRNA-queuosine biosynthesis. Its function is as follows. Catalyzes the NADPH-dependent reduction of 7-cyano-7-deazaguanine (preQ0) to 7-aminomethyl-7-deazaguanine (preQ1). This is NADPH-dependent 7-cyano-7-deazaguanine reductase from Pelodictyon phaeoclathratiforme (strain DSM 5477 / BU-1).